Here is a 711-residue protein sequence, read N- to C-terminus: Early transcription factor 82 kDa subunit (711 aa).

This sequence belongs to the poxviridae VETF large subunit family. As to quaternary structure, heterodimer of a 70 kDa and a 82 kDa subunit. Part of the early transcription complex composed of ETF, RAP94, and the DNA-directed RNA polymerase.

In terms of biological role, acts with RNA polymerase to initiate transcription from early gene promoters. Is recruited by the RPO-associated protein of 94 kDa (RAP94) to form the early transcription complex, which also contains the core RNA polymerase. ETF heterodimer binds to early gene promoters. The protein is Early transcription factor 82 kDa subunit (VETFL) of Oryctolagus cuniculus (Rabbit).